The chain runs to 130 residues: Protein CPn_0713/CP_0033/CPj0713/CpB0740 (130 aa).

It belongs to the chlamydial CPn_0713/CT_663/TC_0034 family.

The polypeptide is Protein CPn_0713/CP_0033/CPj0713/CpB0740 (Chlamydia pneumoniae (Chlamydophila pneumoniae)).